The sequence spans 387 residues: Phosphoglycerate kinase (387 aa).

Substrate contacts are provided by residues 21–23 (DLN), Arg36, 59–62 (HLGR), Arg113, and Arg146. ATP-binding positions include Lys197, Glu314, and 340–343 (GGDT).

It belongs to the phosphoglycerate kinase family. In terms of assembly, monomer.

Its subcellular location is the cytoplasm. It carries out the reaction (2R)-3-phosphoglycerate + ATP = (2R)-3-phospho-glyceroyl phosphate + ADP. It participates in carbohydrate degradation; glycolysis; pyruvate from D-glyceraldehyde 3-phosphate: step 2/5. The chain is Phosphoglycerate kinase from Cronobacter sakazakii (strain ATCC BAA-894) (Enterobacter sakazakii).